The primary structure comprises 274 residues: Octanoyltransferase LipM (274 aa).

Residues Gly-32–Leu-244 form the BPL/LPL catalytic domain. The active-site Acyl-thioester intermediate is the Cys-146.

It belongs to the octanoyltransferase LipM family. In terms of assembly, monomer.

The enzyme catalyses octanoyl-[ACP] + L-lysyl-[protein] = N(6)-octanoyl-L-lysyl-[protein] + holo-[ACP] + H(+). It participates in protein modification; protein lipoylation via endogenous pathway; protein N(6)-(lipoyl)lysine from octanoyl-[acyl-carrier-protein]. Functionally, catalyzes the transfer of endogenously produced octanoic acid from octanoyl-acyl-carrier-protein onto the lipoyl domain of GcvH, an intermediate carrier during protein lipoylation. The protein is Octanoyltransferase LipM of Symbiobacterium thermophilum (strain DSM 24528 / JCM 14929 / IAM 14863 / T).